Consider the following 66-residue polypeptide: Prokaryotic ubiquitin-like protein Pup (66 aa).

Residues 1–10 show a composition bias toward low complexity; sequence MAGQEQQSSS. Residues 1–39 are disordered; it reads MAGQEQQSSSPREEEHEVADAPVPVPSSPQASAHTDGVD. The interval 23-60 is ARC ATPase binding; sequence VPVPSSPQASAHTDGVDDLLDEIDGVLESNAEEFVRGF. Residue Q66 is modified to Deamidated glutamine. Q66 is covalently cross-linked (Isoglutamyl lysine isopeptide (Gln-Lys) (interchain with K-? in acceptor proteins)).

Belongs to the prokaryotic ubiquitin-like protein family. As to quaternary structure, strongly interacts with the proteasome-associated ATPase ARC through a hydrophobic interface; the interacting region of Pup lies in its C-terminal half. There is one Pup binding site per ARC hexamer ring. Is modified by deamidation of its C-terminal glutamine to glutamate by the deamidase Dop, a prerequisite to the subsequent pupylation process.

Its pathway is protein degradation; proteasomal Pup-dependent pathway. In terms of biological role, protein modifier that is covalently attached to lysine residues of substrate proteins, thereby targeting them for proteasomal degradation. The tagging system is termed pupylation. This chain is Prokaryotic ubiquitin-like protein Pup, found in Renibacterium salmoninarum (strain ATCC 33209 / DSM 20767 / JCM 11484 / NBRC 15589 / NCIMB 2235).